We begin with the raw amino-acid sequence, 389 residues long: Chalcone synthase 1 (389 aa).

Residue cysteine 164 is part of the active site.

This sequence belongs to the thiolase-like superfamily. Chalcone/stilbene synthases family.

The enzyme catalyses (E)-4-coumaroyl-CoA + 3 malonyl-CoA + 3 H(+) = 2',4,4',6'-tetrahydroxychalcone + 3 CO2 + 4 CoA. It functions in the pathway secondary metabolite biosynthesis; flavonoid biosynthesis. The primary product of this enzyme is 4,2',4',6'-tetrahydroxychalcone (also termed naringenin-chalcone or chalcone) which can under specific conditions spontaneously isomerize into naringenin. The polypeptide is Chalcone synthase 1 (CHS1) (Medicago sativa (Alfalfa)).